Here is a 291-residue protein sequence, read N- to C-terminus: 29 kDa ribonucleoprotein B, chloroplastic (291 aa).

An RRM 1 domain is found at 87-165; that stretch reads LKLFVGNLPF…RAIRVNAGPA (79 aa). A disordered region spans residues 164 to 202; sequence PAPAKRENSSFGGGRGGNSSYGGGRDGNSSFGGARGGRS. The segment at 166-206 is linker (Gly-rich); sequence PAKRENSSFGGGRGGNSSYGGGRDGNSSFGGARGGRSVDSS. The span at 174–189 shows a compositional bias: gly residues; the sequence is FGGGRGGNSSYGGGRD. The RRM 2 domain occupies 207–285; it reads NRVYVGNLSW…RSIRVSAAEE (79 aa).

It is found in the plastid. It localises to the chloroplast. In terms of biological role, could be involved in splicing and/or processing of chloroplast RNA's. In Nicotiana sylvestris (Wood tobacco), this protein is 29 kDa ribonucleoprotein B, chloroplastic.